Consider the following 555-residue polypeptide: Dihydroxy-acid dehydratase (555 aa).

Asp-78 is a binding site for Mg(2+). Position 119 (Cys-119) interacts with [2Fe-2S] cluster. Asp-120 and Lys-121 together coordinate Mg(2+). At Lys-121 the chain carries N6-carboxylysine. A [2Fe-2S] cluster-binding site is contributed by Cys-195. Residue Glu-444 participates in Mg(2+) binding. The Proton acceptor role is filled by Ser-470.

The protein belongs to the IlvD/Edd family. As to quaternary structure, homodimer. [2Fe-2S] cluster is required as a cofactor. Requires Mg(2+) as cofactor.

It catalyses the reaction (2R)-2,3-dihydroxy-3-methylbutanoate = 3-methyl-2-oxobutanoate + H2O. The catalysed reaction is (2R,3R)-2,3-dihydroxy-3-methylpentanoate = (S)-3-methyl-2-oxopentanoate + H2O. Its pathway is amino-acid biosynthesis; L-isoleucine biosynthesis; L-isoleucine from 2-oxobutanoate: step 3/4. It functions in the pathway amino-acid biosynthesis; L-valine biosynthesis; L-valine from pyruvate: step 3/4. In terms of biological role, functions in the biosynthesis of branched-chain amino acids. Catalyzes the dehydration of (2R,3R)-2,3-dihydroxy-3-methylpentanoate (2,3-dihydroxy-3-methylvalerate) into 2-oxo-3-methylpentanoate (2-oxo-3-methylvalerate) and of (2R)-2,3-dihydroxy-3-methylbutanoate (2,3-dihydroxyisovalerate) into 2-oxo-3-methylbutanoate (2-oxoisovalerate), the penultimate precursor to L-isoleucine and L-valine, respectively. The sequence is that of Dihydroxy-acid dehydratase from Dehalococcoides mccartyi (strain ATCC BAA-2266 / KCTC 15142 / 195) (Dehalococcoides ethenogenes (strain 195)).